A 171-amino-acid chain; its full sequence is UPF0312 protein SAB2563 (171 aa).

This sequence belongs to the UPF0312 family.

The sequence is that of UPF0312 protein SAB2563 from Staphylococcus aureus (strain bovine RF122 / ET3-1).